The sequence spans 429 residues: tRNA-2-methylthio-N(6)-dimethylallyladenosine synthase (429 aa).

An MTTase N-terminal domain is found at 2–115 (KLLYLQTLGC…ISEAVKTPKF (114 aa)). [4Fe-4S] cluster contacts are provided by Cys-11, Cys-46, Cys-78, Cys-147, Cys-151, and Cys-154. The Radical SAM core domain maps to 133 to 365 (RGSPYKAFVN…QSRHNEILDE (233 aa)). A TRAM domain is found at 368 to 429 (KNQVGKIFDV…RMVLYGKITA (62 aa)).

This sequence belongs to the methylthiotransferase family. MiaB subfamily. As to quaternary structure, monomer. Requires [4Fe-4S] cluster as cofactor.

Its subcellular location is the cytoplasm. The catalysed reaction is N(6)-dimethylallyladenosine(37) in tRNA + (sulfur carrier)-SH + AH2 + 2 S-adenosyl-L-methionine = 2-methylsulfanyl-N(6)-dimethylallyladenosine(37) in tRNA + (sulfur carrier)-H + 5'-deoxyadenosine + L-methionine + A + S-adenosyl-L-homocysteine + 2 H(+). In terms of biological role, catalyzes the methylthiolation of N6-(dimethylallyl)adenosine (i(6)A), leading to the formation of 2-methylthio-N6-(dimethylallyl)adenosine (ms(2)i(6)A) at position 37 in tRNAs that read codons beginning with uridine. This Campylobacter hominis (strain ATCC BAA-381 / DSM 21671 / CCUG 45161 / LMG 19568 / NCTC 13146 / CH001A) protein is tRNA-2-methylthio-N(6)-dimethylallyladenosine synthase.